The chain runs to 802 residues: Endoplasmin (802 aa).

The N-terminal stretch at 1-21 (MRALWVLGLCCVLLTFGSARA) is a signal peptide. Residues 42 to 44 (SRT) carry the SRT pseudosubstrate motif motif. Residue N62 is glycosylated (N-linked (GlcNAc...) asparagine). S64 carries the post-translational modification Phosphoserine. N107 carries an N-linked (GlcNAc...) asparagine glycan. N107, D149, and N162 together coordinate ATP. At K168 the chain carries N6-(2-hydroxyisobutyryl)lysine. S172 carries the post-translational modification Phosphoserine. F199 lines the ATP pocket. The N-linked (GlcNAc...) asparagine glycan is linked to N217. The segment at 288 to 323 (TVEEPAEEEEAAKEEKEEADDEAAVEEEEEEKKPKT) is disordered. Residues 289–317 (VEEPAEEEEAAKEEKEEADDEAAVEEEEE) show a composition bias toward acidic residues. Position 403 is a phosphoserine (S403). Position 404 is an N6-succinyllysine (K404). A glycan (N-linked (GlcNAc...) asparagine) is linked at N445. The residue at position 447 (S447) is a Phosphoserine. K479 is modified (N6-acetyllysine). N-linked (GlcNAc...) asparagine glycosylation is found at N481 and N502. K633 carries the N6-succinyllysine modification. Positions 750 to 802 (DPDAKVEEEPEEEPEDTTEDTEQDEEEEMDAGTDEEEQEQEPEKKSTAEKDEL) are disordered. Acidic residues predominate over residues 757-789 (EEPEEEPEDTTEDTEQDEEEEMDAGTDEEEQEQ). Position 782 is a phosphothreonine (T782). Positions 790–802 (EPEKKSTAEKDEL) are enriched in basic and acidic residues. Residues 799-802 (KDEL) carry the Prevents secretion from ER motif.

This sequence belongs to the heat shock protein 90 family. In terms of assembly, homodimer; disulfide-linked. Component of an EIF2 complex at least composed of CELF1/CUGBP1, CALR, CALR3, EIF2S1, EIF2S2, HSP90B1 and HSPA5. Part of a large chaperone multiprotein complex comprising DNAJB11, HSP90B1, HSPA5, HYOU, PDIA2, PDIA4, PDIA6, PPIB, SDF2L1, UGGT1 and very small amounts of ERP29, but not, or at very low levels, CALR nor CANX. Interacts with AIMP1; regulates its retention in the endoplasmic reticulum. Hyperglycosylated form interacts with OS9; promoting its degradation by the endoplasmic reticulum associated degradation (ERAD). Interacts with CNPY3. This interaction is disrupted in the presence of ATP. Interacts with TLR4 and TLR9, but not with TLR3. Interacts with MZB1 in a calcium-dependent manner. Interacts with METTL23. Interacts with IL1B; the interaction facilitates cargo translocation into the ERGIC. Interacts with EIF2AK3. Post-translationally, phosphorylated by CK2. N-glycosylated cotranslationally at Asn-217 by STT3A-containing OST-A complex: this glycosylation is constitutive. In response to various stress, 5 additional facultative sites (Asn-62, Asn-107, Asn-445, Asn-481 and Asn-502) can be glycosylated post-translationally by STT3B-containing OST-B complex, leading to a hyperglycosylated form that is degraded by the ER-associated degradation (ERAD) pathway. In normal conditions, the OST-A complex together with CCDC134 prevent glycosylation at facultative sites during protein folding, thereby preventing hyperglycosylation. Mechanistically, nascent HSP90B1 is tethered during translation to a specialized CCDC134-containing translocon that forms a microenvironment for its folding, in which STT3A associates with the SRT pseudosubstrate motif, and prevents access to facultative glycosylation sites until folding is completed, rendering its facultative sites inaccessible to the OST-B complex.

The protein localises to the endoplasmic reticulum lumen. The protein resides in the sarcoplasmic reticulum lumen. It is found in the melanosome. It catalyses the reaction ATP + H2O = ADP + phosphate + H(+). ATP-dependent chaperone involved in the processing of proteins in the endoplasmic reticulum, regulating their transport. Together with MESD, acts as a modulator of the Wnt pathway by promoting the folding of LRP6, a coreceptor of the canonical Wnt pathway. When associated with CNPY3, required for proper folding of Toll-like receptors. Promotes folding and trafficking of TLR4 to the cell surface. May participate in the unfolding of cytosolic leaderless cargos (lacking the secretion signal sequence) such as the interleukin 1/IL-1 to facilitate their translocation into the ERGIC (endoplasmic reticulum-Golgi intermediate compartment) and secretion; the translocation process is mediated by the cargo receptor TMED10. The chain is Endoplasmin (HSP90B1) from Oryctolagus cuniculus (Rabbit).